The chain runs to 379 residues: tRNA(Met) cytidine acetate ligase (379 aa).

Residues 8 to 21 (IAEFNPFHKGHEYL), glycine 97, asparagine 153, and arginine 176 contribute to the ATP site.

The protein belongs to the TmcAL family.

Its subcellular location is the cytoplasm. The enzyme catalyses cytidine(34) in elongator tRNA(Met) + acetate + ATP = N(4)-acetylcytidine(34) in elongator tRNA(Met) + AMP + diphosphate. In terms of biological role, catalyzes the formation of N(4)-acetylcytidine (ac(4)C) at the wobble position of elongator tRNA(Met), using acetate and ATP as substrates. First activates an acetate ion to form acetyladenylate (Ac-AMP) and then transfers the acetyl group to tRNA to form ac(4)C34. The chain is tRNA(Met) cytidine acetate ligase from Lactococcus lactis subsp. cremoris (strain MG1363).